The sequence spans 459 residues: Serine/threonine-protein kinase 12 (459 aa).

Residues 1 to 30 (MEEDYQQPRFTIGRQSSMAPEKIPEPSVHS) form a disordered region. ANK repeat units follow at residues 42–71 (DGGV…DANY), 75–104 (DDRT…EVDP), and 108–137 (WGST…KHPM). Positions 102–417 (VDPKDRWGST…EIIKRLESIL (316 aa)) constitute a Protein kinase domain. Residues 108–116 (WGSTPFADA) and K184 each bind ATP. D281 (proton acceptor) is an active-site residue.

This sequence belongs to the protein kinase superfamily. Ser/Thr protein kinase family. In terms of assembly, interacts with BLUS1, PHOT1 and PHOT2. In terms of tissue distribution, accumulates in leaves, stems, petioles and roots, especially in guard cells.

Its subcellular location is the cytoplasm. It localises to the cytosol. It carries out the reaction L-seryl-[protein] + ATP = O-phospho-L-seryl-[protein] + ADP + H(+). The enzyme catalyses L-threonyl-[protein] + ATP = O-phospho-L-threonyl-[protein] + ADP + H(+). Its function is as follows. Serine/threonine protein kinase that phosphorylates proteins on serine and threonine residues. Mediates blue light-dependent stomatal opening in guard cells by promoting plasma membrane-type ATPases (AHA1 and AHA2) phosphorylation. The polypeptide is Serine/threonine-protein kinase 12 (Arabidopsis thaliana (Mouse-ear cress)).